The chain runs to 251 residues: Phosphoribosylaminoimidazole-succinocarboxamide synthase (251 aa).

This sequence belongs to the SAICAR synthetase family.

It carries out the reaction 5-amino-1-(5-phospho-D-ribosyl)imidazole-4-carboxylate + L-aspartate + ATP = (2S)-2-[5-amino-1-(5-phospho-beta-D-ribosyl)imidazole-4-carboxamido]succinate + ADP + phosphate + 2 H(+). Its pathway is purine metabolism; IMP biosynthesis via de novo pathway; 5-amino-1-(5-phospho-D-ribosyl)imidazole-4-carboxamide from 5-amino-1-(5-phospho-D-ribosyl)imidazole-4-carboxylate: step 1/2. This Ruegeria pomeroyi (strain ATCC 700808 / DSM 15171 / DSS-3) (Silicibacter pomeroyi) protein is Phosphoribosylaminoimidazole-succinocarboxamide synthase.